Reading from the N-terminus, the 72-residue chain is SHDEPSESSEPCCDSCDCTKSIPPECHCANIRLNSCHSACKSCICTRSMPGKCRCLDTDDFCYKPCESMDKD.

7 cysteine pairs are disulfide-bonded: Cys12–Cys66, Cys13–Cys28, Cys16–Cys62, Cys18–Cys26, Cys36–Cys43, Cys40–Cys55, and Cys45–Cys53.

The protein belongs to the Bowman-Birk serine protease inhibitor family.

This is Bowman-Birk type trypsin inhibitor from Vigna radiata var. radiata (Mung bean).